We begin with the raw amino-acid sequence, 453 residues long: Vitamin D3 receptor A (453 aa).

Residues 53 to 128 constitute a DNA-binding region (nuclear receptor); sequence PRICGVCGDK…IGMMKEFILT (76 aa). Zn(2+) contacts are provided by C56, C59, C73, C76, C92, C98, C108, and C111. 2 NR C4-type zinc fingers span residues 56–76 and 92–111; these read CGVCGDKATGFHFNAMTCEGC and CPFNGNCTITKDNRRHCQAC. The segment at 129–158 is hinge; it reads DEEVQRKKDLIMKRKEEEAAREARKPRLSD. An NR LBD domain is found at 159–449; it reads EQMQIINSLV…LTPLVLEVFG (291 aa). Calcitriol contacts are provided by Y175 and S265. The interaction with coactivator LXXLL motif stretch occupies residues 274-292; that stretch reads KMIPGFRDLTAEDQIALLK. Residues R302, S306, H333, and H423 each contribute to the calcitriol site. Positions 442 to 450 match the 9aaTAD motif; sequence PLVLEVFGS.

The protein belongs to the nuclear hormone receptor family. NR1 subfamily. As to quaternary structure, homodimer in the absence of bound vitamin D3. Heterodimer with RXRA after vitamin D3 binding. Interacts with ncoa1 and possibly other coactivators, leading to a strong increase of transcription of target genes. In terms of tissue distribution, detected in embryo 24 to 48 hours after fertilization and in gastrula.

It is found in the nucleus. It localises to the cytoplasm. Nuclear receptor for calcitriol, the active form of vitamin D3 which mediates the action of this vitamin on cells. Enters the nucleus upon vitamin D3 binding where it forms heterodimers with the retinoid X receptor/RXR. The VDR-RXR heterodimers bind to specific response elements on DNA and activate the transcription of vitamin D3-responsive target genes. Recruited to promoters via its interaction with BAZ1B/WSTF which mediates the interaction with acetylated histones, an essential step for VDR-promoter association. Plays a central role in calcium homeostasis. This chain is Vitamin D3 receptor A (vdra), found in Danio rerio (Zebrafish).